The primary structure comprises 628 residues: Forkhead box protein O (628 aa).

Position 50 is a phosphothreonine; by PKB/AKT1 (threonine 50). Phosphoserine is present on serine 81. Positions 101 to 207 (WGNLSYADLI…ETSRYEKRRG (107 aa)) form a DNA-binding region, fork-head. Disordered stretches follow at residues 188–210 (KSVR…GRAK) and 223–270 (GLND…SSCG). Serine 196 carries the post-translational modification Phosphoserine; by PKB/AKT1. Polar residues-rich tracts occupy residues 227-236 (ATPSPSSSVS) and 261-270 (RASSNASSCG). Serine 264 bears the Phosphoserine; by PKB/AKT1 mark. 3 positions are modified to phosphoserine: serine 267, serine 268, and serine 273. Disordered stretches follow at residues 327-373 (SAAS…SLQP) and 398-451 (NSVT…QQQQ). The segment covering 334–343 (TQPPPPPYPA) has biased composition (pro residues). Residues 344–359 (PQQQQQQQPQQQQAYT) show a composition bias toward low complexity. A compositionally biased stretch (polar residues) spans 411-423 (SEPSSDSLNTYSN). The span at 438–451 (QQQRQQQQQQQQQQ) shows a compositional bias: low complexity.

Interacts with melt.

It localises to the cytoplasm. The protein resides in the nucleus. Its function is as follows. Transcription factor involved in the regulation of the insulin signaling pathway. Consistently activates both the downstream target Thor\d4EBP and the feedback control target InR. Involved in negative regulation of the cell cycle, modulating cell growth and proliferation. In response to cellular stresses, such as nutrient deprivation or increased levels of reactive oxygen species, foxo is activated and inhibits growth through the action of target genes such as Thor. Foxo activated in the adult fat body can regulate lifespan in adults; an insulin peptide itself may function as one secondary messenger of insulin-regulated aging. Also regulates Lip4, homolog of human acid lipases, thereby acting as a key modulator of lipid metabolism by insulin signaling and integrates insulin responses to glucose and lipid homeostasis. The polypeptide is Forkhead box protein O (Drosophila willistoni (Fruit fly)).